The chain runs to 3174 residues: Probable polyketide synthase 15 (3174 aa).

A Ketosynthase family 3 (KS3) domain is found at Asn23–Gln474. Active-site for beta-ketoacyl synthase activity residues include Cys194, His342, and His397. Coiled-coil stretches lie at residues Leu472 to Asn509 and Glu574 to Thr604. Residues Gln578 to Leu599 are compositionally biased toward basic and acidic residues. A disordered region spans residues Gln578 to Arg601. The tract at residues Gly707–Tyr740 is acyl/malonyl transferase. Ser717 functions as the For acyl/malonyl transferase activity in the catalytic mechanism. Residues Ile1034 to Asn1156 form an N-terminal hotdog fold region. The PKS/mFAS DH domain occupies Ile1034–Pro1332. The active-site Proton acceptor; for dehydratase activity is the His1068. The interval Asn1182–Pro1332 is C-terminal hotdog fold. Asp1241 (proton donor; for dehydratase activity) is an active-site residue. A coiled-coil region spans residues Leu1758–Val1793. The Carrier domain occupies Val2653–Ile2730. At Ser2690 the chain carries O-(pantetheine 4'-phosphoryl)serine.

Pantetheine 4'-phosphate serves as cofactor.

Its function is as follows. Probable polyketide synthase. This is Probable polyketide synthase 15 (pks15) from Dictyostelium discoideum (Social amoeba).